Consider the following 386-residue polypeptide: L-lactate dehydrogenase (386 aa).

One can recognise an FMN hydroxy acid dehydrogenase domain in the interval 1–380 (MIISAASDYR…SGDALSRVTR (380 aa)). Y24 contributes to the substrate binding site. Positions 106 and 127 each coordinate FMN. Position 129 (Y129) interacts with substrate. T155 is a binding site for FMN. Residue R164 coordinates substrate. An FMN-binding site is contributed by K251. The active-site Proton acceptor is H275. Position 278 (R278) interacts with substrate. 306–330 (DSGIRSGLDVVRMLALGADAVLLGR) is a binding site for FMN.

The protein belongs to the FMN-dependent alpha-hydroxy acid dehydrogenase family. FMN is required as a cofactor.

The protein localises to the cell inner membrane. The enzyme catalyses (S)-lactate + A = pyruvate + AH2. Its function is as follows. Catalyzes the conversion of L-lactate to pyruvate. Is coupled to the respiratory chain. The polypeptide is L-lactate dehydrogenase (Xanthomonas campestris pv. campestris (strain 8004)).